Here is an 881-residue protein sequence, read N- to C-terminus: Putative leucine-rich repeat receptor-like protein kinase At2g19210 (881 aa).

The first 25 residues, 1–25 (MVHYNFLSLIIFACFFAVFVLLVRA), serve as a signal peptide directing secretion. The Extracellular portion of the chain corresponds to 26 to 518 (QDQSGFVSID…SDEKTKKNVY (493 aa)). Residues Asn143, Asn234, Asn295, Asn310, Asn404, Asn419, Asn435, Asn446, and Asn462 are each glycosylated (N-linked (GlcNAc...) asparagine). LRR repeat units follow at residues 438-460 (LLHI…LGNL) and 462-483 (NLTE…KLLE). The helical transmembrane segment at 519–539 (IIPLVASVVGVLGLVLAIALF) threads the bilayer. The Cytoplasmic segment spans residues 540–881 (LLYKKRHRRG…FDSGMFPQAR (342 aa)). In terms of domain architecture, Protein kinase spans 576-850 (NNFERVLGQG…HVVAELKESV (275 aa)). ATP contacts are provided by residues 582 to 590 (LGQGGFGKV) and Lys603. The residue at position 648 (Tyr648) is a Phosphotyrosine. The active-site Proton acceptor is Asp699. Thr734 and Thr739 each carry phosphothreonine. Tyr747 is subject to Phosphotyrosine. The interval 851–881 (SRARAGGGSGASSVTDPAMTNFDSGMFPQAR) is disordered.

Belongs to the protein kinase superfamily. Ser/Thr protein kinase family.

The protein localises to the cell membrane. The catalysed reaction is L-seryl-[protein] + ATP = O-phospho-L-seryl-[protein] + ADP + H(+). It catalyses the reaction L-threonyl-[protein] + ATP = O-phospho-L-threonyl-[protein] + ADP + H(+). This is Putative leucine-rich repeat receptor-like protein kinase At2g19210 from Arabidopsis thaliana (Mouse-ear cress).